Reading from the N-terminus, the 395-residue chain is Elongation factor Tu (395 aa).

One can recognise a tr-type G domain in the interval 10–205 (KVHMNVGTIG…TMDEYFKDPV (196 aa)). The G1 stretch occupies residues 19–26 (GHVDHGKT). 19 to 26 (GHVDHGKT) provides a ligand contact to GTP. T26 provides a ligand contact to Mg(2+). Residues 60–64 (GITIN) are G2. The interval 81–84 (DCPG) is G3. Residues 81 to 85 (DCPGH) and 136 to 139 (NKVD) contribute to the GTP site. Residues 136–139 (NKVD) form a G4 region. The segment at 173-175 (SAF) is G5.

The protein belongs to the TRAFAC class translation factor GTPase superfamily. Classic translation factor GTPase family. EF-Tu/EF-1A subfamily. Monomer.

The protein resides in the cytoplasm. The enzyme catalyses GTP + H2O = GDP + phosphate + H(+). Its function is as follows. GTP hydrolase that promotes the GTP-dependent binding of aminoacyl-tRNA to the A-site of ribosomes during protein biosynthesis. In Treponema denticola (strain ATCC 35405 / DSM 14222 / CIP 103919 / JCM 8153 / KCTC 15104), this protein is Elongation factor Tu.